The following is a 207-amino-acid chain: LexA repressor (207 aa).

A DNA-binding region (H-T-H motif) is located at residues Val33 to Asn52. Active-site for autocatalytic cleavage activity residues include Ser129 and Lys166.

This sequence belongs to the peptidase S24 family. As to quaternary structure, homodimer.

The enzyme catalyses Hydrolysis of Ala-|-Gly bond in repressor LexA.. Its function is as follows. Represses a number of genes involved in the response to DNA damage (SOS response), including recA and lexA. In the presence of single-stranded DNA, RecA interacts with LexA causing an autocatalytic cleavage which disrupts the DNA-binding part of LexA, leading to derepression of the SOS regulon and eventually DNA repair. This chain is LexA repressor, found in Oleidesulfovibrio alaskensis (strain ATCC BAA-1058 / DSM 17464 / G20) (Desulfovibrio alaskensis).